The following is a 62-amino-acid chain: Large ribosomal subunit protein uL30 (62 aa).

The protein belongs to the universal ribosomal protein uL30 family. As to quaternary structure, part of the 50S ribosomal subunit.

The protein is Large ribosomal subunit protein uL30 of Alkalilimnicola ehrlichii (strain ATCC BAA-1101 / DSM 17681 / MLHE-1).